A 357-amino-acid chain; its full sequence is tRNA N6-adenosine threonylcarbamoyltransferase (357 aa).

Fe cation is bound by residues H119 and H123. Residues 141–145 (LISGG), D174, G187, and N284 contribute to the substrate site. Fe cation is bound at residue D312.

Belongs to the KAE1 / TsaD family. Requires Fe(2+) as cofactor.

The protein resides in the cytoplasm. It carries out the reaction L-threonylcarbamoyladenylate + adenosine(37) in tRNA = N(6)-L-threonylcarbamoyladenosine(37) in tRNA + AMP + H(+). Functionally, required for the formation of a threonylcarbamoyl group on adenosine at position 37 (t(6)A37) in tRNAs that read codons beginning with adenine. Is involved in the transfer of the threonylcarbamoyl moiety of threonylcarbamoyl-AMP (TC-AMP) to the N6 group of A37, together with TsaE and TsaB. TsaD likely plays a direct catalytic role in this reaction. This is tRNA N6-adenosine threonylcarbamoyltransferase from Pelagibacter ubique (strain HTCC1062).